We begin with the raw amino-acid sequence, 1431 residues long: Caskin-1 (1431 aa).

ANK repeat units lie at residues 48-77 (DGFS…AVDI), 81-110 (KGMR…AVNV), 114-143 (EGHI…NPCM), 147-176 (SGKT…CAAL), 188-217 (NGTS…DINR), and 220-249 (KSGT…NAQV). Y253 is subject to Phosphotyrosine. In terms of domain architecture, SH3 spans 281–347 (SAALQVRATK…PSSLGEAIVK (67 aa)). The segment at 348-372 (RAGSRTGSEPSPPQGGGSLGPSAPP) is disordered. At S358 the chain carries Phosphoserine. The CASK-binding stretch occupies residues 375-471 (IWVLRKPFAG…PKKLESASAS (97 aa)). Omega-N-methylarginine is present on R398. Positions 420-430 (SQKSVSESSPG) are enriched in polar residues. The segment at 420 to 471 (SQKSVSESSPGDSPVKPPEGSSGAARSQPPAAHAGQVYGEQPPKKLESASAS) is disordered. Phosphoserine is present on residues S423 and S432. 2 consecutive SAM domains span residues 476–539 (KSAE…LNIP) and 545–609 (HKPA…LAEL). Phosphoserine occurs at positions 637 and 650. Low complexity predominate over residues 669–679 (LSGPAEAGAAA). Disordered regions lie at residues 669 to 1000 (LSGP…TGSA) and 1016 to 1041 (GGGG…EPGR). Positions 692–712 (RTTSRESSLSGRARHISSSQE) are enriched in polar residues. 2 positions are modified to phosphoserine: S723 and S728. The residue at position 741 (T741) is a Phosphothreonine. Position 791 is a phosphoserine (S791). Residues 848–860 (PPAPGPAPPPVPA) show a composition bias toward pro residues. Phosphoserine occurs at positions 891, 893, and 989. The span at 1028–1037 (GHPTPRPASP) shows a compositional bias: pro residues. T1067 bears the Phosphothreonine mark. Position 1069 is a phosphoserine (S1069). Disordered regions lie at residues 1072–1372 (VTGL…RQKL) and 1389–1410 (KIRQ…STGS). Residues 1148–1160 (DTVKRRPKAKEPD) show a composition bias toward basic and acidic residues. Residues 1191-1215 (PELPPPPPPAEPPPADLMQLPPLPL) show a composition bias toward pro residues. Over residues 1236–1247 (QPVSKIQGSPTP) the composition is skewed to polar residues. At S1259 the chain carries Phosphoserine. At T1268 the chain carries Phosphothreonine. Residues 1268–1283 (TPPPVSPKPPPPPTAP) are compositionally biased toward pro residues. Low complexity-rich tracts occupy residues 1284-1299 (KPAK…SATP), 1309-1327 (PPAA…SASP), and 1345-1359 (PRAA…PVAS). At S1363 the chain carries Phosphoserine. The span at 1389 to 1407 (KIRQEDGQGPRPSSIEEKS) shows a compositional bias: basic and acidic residues.

In terms of assembly, binds the CaM kinase domain of CASK. Forms a ternary complex with CASK and LIN7A, LIN7B or LIN7C. Competes with APBA1 that forms a similar complex with CASK and LIN7 proteins. The tripartite complex CASKIN1/CASK/LIN7(A/B/C) binds the cytoplasmic tail of NRXN1. Polymerizes, via the tandem SAM domains, to form long, 8 nM wide fibers, upon which other proteins can assemble.

The protein localises to the cytoplasm. Its function is as follows. May link the scaffolding protein CASK to downstream intracellular effectors. This is Caskin-1 (Caskin1) from Mus musculus (Mouse).